Consider the following 453-residue polypeptide: SH2 domain-containing protein 4A (453 aa).

The stretch at 96 to 127 (EIIAEQARREAEKEAEQLRKKQEVELSQLSTL) forms a coiled coil. The segment at 280–301 (AVKRPPIPPKPKLPPSANNSSI) is disordered. Residues 284 to 293 (PPIPPKPKLP) show a composition bias toward pro residues. The SH2 domain occupies 347-439 (WFHGIISRQE…LGRELLRFPC (93 aa)).

It is found in the cytoplasm. In terms of biological role, inhibits estrogen-induced cell proliferation. In Xenopus tropicalis (Western clawed frog), this protein is SH2 domain-containing protein 4A (sh2d4a).